A 508-amino-acid chain; its full sequence is Heat shock 70 kDa protein 14 (508 aa).

This sequence belongs to the heat shock protein 70 family. In terms of assembly, component of ribosome-associated complex (RAC).

The protein resides in the cytoplasm. The protein localises to the cytosol. Its function is as follows. Component of the ribosome-associated complex (RAC), a complex involved in folding or maintaining nascent polypeptides in a folding-competent state. The sequence is that of Heat shock 70 kDa protein 14 (hspa14) from Xenopus tropicalis (Western clawed frog).